The chain runs to 596 residues: Clathrin heavy chain linker domain-containing protein 1 (596 aa).

A coiled-coil region spans residues 129–241 (QLEAKMRIIE…RDIAENLKKD (113 aa)).

The polypeptide is Clathrin heavy chain linker domain-containing protein 1 (Clhc1) (Mus musculus (Mouse)).